A 223-amino-acid chain; its full sequence is N-acetylmuramic acid 6-phosphate phosphatase (223 aa).

The Nucleophile role is filled by Asp9. Residues Asp9, Asp11, and Asp168 each coordinate Mg(2+). The active-site Proton donor is Asp11.

This sequence belongs to the HAD-like hydrolase superfamily. CbbY/CbbZ/Gph/YieH family. Phosphatase MupP subfamily. It depends on Mg(2+) as a cofactor.

The catalysed reaction is N-acetyl-D-muramate 6-phosphate + H2O = N-acetyl-D-muramate + phosphate. Its pathway is cell wall biogenesis; peptidoglycan recycling. Its function is as follows. Specifically catalyzes the dephosphorylation of N-acetylmuramate 6-phosphate (MurNAc-6P) to MurNac. Is involved in peptidoglycan recycling as part of a cell wall recycling pathway that bypasses de novo biosynthesis of the peptidoglycan precursor UDP-MurNAc. Plays a role in intrinsic resistance to fosfomycin, which targets the de novo synthesis of UDP-MurNAc. Shows a very low activity on GlcNAc-6P, and neither alpha-1-phosphorylated MurNAc, GlcNAc, or glucose nor glucosamine-6P or glucose-6P can be used as a substrate. The sequence is that of N-acetylmuramic acid 6-phosphate phosphatase from Pseudomonas putida (strain ATCC 47054 / DSM 6125 / CFBP 8728 / NCIMB 11950 / KT2440).